A 647-amino-acid chain; its full sequence is Chaperone protein DnaK (647 aa).

Threonine 198 carries the post-translational modification Phosphothreonine; by autocatalysis. Basic and acidic residues-rich tracts occupy residues 514-529 (AEAN…ESVD), 540-557 (STEK…DADK), and 600-622 (SQEK…KDDN). Disordered stretches follow at residues 514 to 557 (AEAN…DADK) and 596 to 647 (AIYK…EKSA). Residues 623–632 (VVDADFEEVK) show a composition bias toward acidic residues. The segment covering 633-647 (EESKEGKEEDKEKSA) has biased composition (basic and acidic residues).

It belongs to the heat shock protein 70 family.

Functionally, acts as a chaperone. The chain is Chaperone protein DnaK from Pelagibacter ubique (strain HTCC1062).